A 251-amino-acid chain; its full sequence is Imidazole glycerol phosphate synthase subunit HisF (251 aa).

Active-site residues include Asp11 and Asp130.

Belongs to the HisA/HisF family. As to quaternary structure, heterodimer of HisH and HisF.

It localises to the cytoplasm. The catalysed reaction is 5-[(5-phospho-1-deoxy-D-ribulos-1-ylimino)methylamino]-1-(5-phospho-beta-D-ribosyl)imidazole-4-carboxamide + L-glutamine = D-erythro-1-(imidazol-4-yl)glycerol 3-phosphate + 5-amino-1-(5-phospho-beta-D-ribosyl)imidazole-4-carboxamide + L-glutamate + H(+). Its pathway is amino-acid biosynthesis; L-histidine biosynthesis; L-histidine from 5-phospho-alpha-D-ribose 1-diphosphate: step 5/9. Its function is as follows. IGPS catalyzes the conversion of PRFAR and glutamine to IGP, AICAR and glutamate. The HisF subunit catalyzes the cyclization activity that produces IGP and AICAR from PRFAR using the ammonia provided by the HisH subunit. The polypeptide is Imidazole glycerol phosphate synthase subunit HisF (Chlorobaculum parvum (strain DSM 263 / NCIMB 8327) (Chlorobium vibrioforme subsp. thiosulfatophilum)).